Here is a 264-residue protein sequence, read N- to C-terminus: Ribosome-recycling factor, mitochondrial (264 aa).

It belongs to the RRF family.

Its subcellular location is the mitochondrion. In terms of biological role, necessary for protein synthesis in mitochondria. Functions as a ribosome recycling factor in mitochondria. The chain is Ribosome-recycling factor, mitochondrial (RRF1) from Yarrowia lipolytica (strain CLIB 122 / E 150) (Yeast).